The chain runs to 230 residues: 2,3-bisphosphoglycerate-dependent phosphoglycerate mutase (230 aa).

Substrate is bound by residues 8-15, 21-22, R60, 87-90, K98, and 114-115; these read RHGQSIWN, TG, ERHY, and RR. H9 acts as the Tele-phosphohistidine intermediate in catalysis. E87 functions as the Proton donor/acceptor in the catalytic mechanism. Positions 117 to 143 are disordered; it reads YDTPPPALDAEDERHPRHDPRYAGLDP. The segment covering 128 to 137 has biased composition (basic and acidic residues); sequence DERHPRHDPR. 183–184 contacts substrate; the sequence is GN.

This sequence belongs to the phosphoglycerate mutase family. BPG-dependent PGAM subfamily. In terms of assembly, homodimer.

The catalysed reaction is (2R)-2-phosphoglycerate = (2R)-3-phosphoglycerate. It functions in the pathway carbohydrate degradation; glycolysis; pyruvate from D-glyceraldehyde 3-phosphate: step 3/5. In terms of biological role, catalyzes the interconversion of 2-phosphoglycerate and 3-phosphoglycerate. In Halorhodospira halophila (strain DSM 244 / SL1) (Ectothiorhodospira halophila (strain DSM 244 / SL1)), this protein is 2,3-bisphosphoglycerate-dependent phosphoglycerate mutase.